A 577-amino-acid polypeptide reads, in one-letter code: Sensory neuron membrane protein 2 (577 aa).

The Cytoplasmic portion of the chain corresponds to 1–6; that stretch reads MVQCTL. The chain crosses the membrane as a helical span at residues 7-27; that stretch reads IWAGIGAMMAVSGALLGWVVF. Residues 28-519 are Extracellular-facing; the sequence is PRAVHEKVIE…LMKVLSLLDV (492 aa). N-linked (GlcNAc...) asparagine glycans are attached at residues Asn-66, Asn-161, Asn-271, and Asn-307. Cystine bridges form between Cys-316–Cys-384, Cys-345–Cys-411, and Cys-386–Cys-400. The helical transmembrane segment at 520–540 threads the bilayer; that stretch reads VQWVLIGVGLLLAVLMPTVYF. At 541-577 the chain is on the cytoplasmic side; the sequence is VKRCRGEGSRTVSPAVTATTSAASLSTVAGVTGDRSK.

Belongs to the CD36 family.

Its subcellular location is the cell membrane. Functionally, plays an olfactory role that is not restricted to pheromone sensitivity. The protein is Sensory neuron membrane protein 2 of Anopheles gambiae (African malaria mosquito).